A 386-amino-acid chain; its full sequence is D-amino-acid oxidase (386 aa).

G14, G15, V16, V17, E39, R40, A51, G52, and G53 together coordinate FAD. Residues 109-138 form a disordered region; the sequence is SSSPPHPLLPPWVDPSASAAPPRELGTPDT. Residues 112-121 show a composition bias toward pro residues; that stretch reads PPHPLLPPWV. The FAD site is built by R174, V175, and A176. Positions 253, 261, and 332 each coordinate D-serine. D-proline-binding residues include Y261 and K332. Positions 332, 344, 345, 362, and 364 each coordinate FAD. K332 lines the D-dopa pocket. Residue G362 participates in D-serine binding. Residue G362 coordinates D-proline. G362 is a D-dopa binding site.

This sequence belongs to the DAMOX/DASOX family.

It carries out the reaction a D-alpha-amino acid + O2 + H2O = a 2-oxocarboxylate + H2O2 + NH4(+). The catalysed reaction is D-alanine + O2 + H2O = pyruvate + H2O2 + NH4(+). The enzyme catalyses D-aspartate + O2 + H2O = oxaloacetate + H2O2 + NH4(+). Functionally, catalyzes the oxidative deamination of D-amino acids with broad substrate specificity. Enables the organism to utilize D-amino acids as a source of nutrients. The chain is D-amino-acid oxidase from Zea mays (Maize).